A 354-amino-acid chain; its full sequence is Rhodopsin (354 aa).

Residues 1 to 36 (MNGTEGPYFYIPMVNTTGIVRSPYEYPQYYLVNPAA) lie on the Extracellular side of the membrane. N-linked (GlcNAc...) asparagine glycans are attached at residues Asn2 and Asn15. The chain crosses the membrane as a helical span at residues 37–61 (YAALGAYMFFLILLGFPINFLTLYV). Over 62–73 (TLEHKKLRTPLN) the chain is Cytoplasmic. Residues 74–96 (YILLNLAVADLFMVFGGFTTTMY) traverse the membrane as a helical segment. Topologically, residues 97-110 (TSMHGYFVLGRLGC) are extracellular. An intrachain disulfide couples Cys110 to Cys187. A helical membrane pass occupies residues 111–133 (NLEGFFATLGGEIGLWSLVVLAI). The 'Ionic lock' involved in activated form stabilization motif lies at 134–136 (ERW). Residues 134-152 (ERWVVVCKPISNFRFGENH) lie on the Cytoplasmic side of the membrane. The helical transmembrane segment at 153 to 173 (AIMGLAFTWIMACACAVPPLV) threads the bilayer. The Extracellular portion of the chain corresponds to 174-202 (GWSRYIPEGMQCSCGVDYYTRAEGFNNES). The N-linked (GlcNAc...) asparagine glycan is linked to Asn200. Residues 203 to 224 (FVVYMFTCHFCIPLTIIGFCYG) form a helical membrane-spanning segment. The Cytoplasmic segment spans residues 225–252 (RLLCAVKEAAAAQQESETTQRAEREVTR). The chain crosses the membrane as a helical span at residues 253-274 (MVILMVVGFLVCWLPYASVAWY). Residues 275-286 (IFSNQGSQFGPL) lie on the Extracellular side of the membrane. A helical membrane pass occupies residues 287-308 (FMTIPAFFAKSSSVYNPMIYIC). Lys296 is subject to N6-(retinylidene)lysine. At 309–354 (MNKQFRHCMITTLCCGKNPFEEEEGASTTASKTEASSVSSSSVSPA) the chain is on the cytoplasmic side. Residues Cys322 and Cys323 are each lipidated (S-palmitoyl cysteine). The disordered stretch occupies residues 333 to 354 (GASTTASKTEASSVSSSSVSPA). Positions 334–354 (ASTTASKTEASSVSSSSVSPA) are enriched in low complexity.

This sequence belongs to the G-protein coupled receptor 1 family. Opsin subfamily. In terms of processing, phosphorylated on some or all of the serine and threonine residues present in the C-terminal region. Contains one covalently linked retinal chromophore.

It is found in the membrane. The protein resides in the cell projection. The protein localises to the cilium. Its subcellular location is the photoreceptor outer segment. Photoreceptor required for image-forming vision at low light intensity. While most salt water fish species use retinal as chromophore, most freshwater fish use 3-dehydroretinal, or a mixture of retinal and 3-dehydroretinal. Light-induced isomerization of 11-cis to all-trans retinal triggers a conformational change that activates signaling via G-proteins. Subsequent receptor phosphorylation mediates displacement of the bound G-protein alpha subunit by arrestin and terminates signaling. The sequence is that of Rhodopsin (rho) from Salaria pavo (Peacock blenny).